Reading from the N-terminus, the 521-residue chain is NAD(P)H-quinone oxidoreductase subunit 2 (521 aa).

14 consecutive transmembrane segments (helical) span residues isoleucine 16–glycine 36, valine 40–valine 60, leucine 80–valine 100, leucine 110–alanine 130, leucine 133–tyrosine 153, leucine 168–leucine 188, leucine 212–valine 232, proline 246–isoleucine 266, tryptophan 280–leucine 300, methionine 308–serine 328, valine 336–phenylalanine 356, leucine 380–glycine 400, isoleucine 402–valine 422, and valine 468–phenylalanine 488.

This sequence belongs to the complex I subunit 2 family. In terms of assembly, NDH-1 can be composed of about 15 different subunits; different subcomplexes with different compositions have been identified which probably have different functions.

It localises to the cellular thylakoid membrane. It carries out the reaction a plastoquinone + NADH + (n+1) H(+)(in) = a plastoquinol + NAD(+) + n H(+)(out). The enzyme catalyses a plastoquinone + NADPH + (n+1) H(+)(in) = a plastoquinol + NADP(+) + n H(+)(out). Functionally, NDH-1 shuttles electrons from an unknown electron donor, via FMN and iron-sulfur (Fe-S) centers, to quinones in the respiratory and/or the photosynthetic chain. The immediate electron acceptor for the enzyme in this species is believed to be plastoquinone. Couples the redox reaction to proton translocation, and thus conserves the redox energy in a proton gradient. Cyanobacterial NDH-1 also plays a role in inorganic carbon-concentration. The protein is NAD(P)H-quinone oxidoreductase subunit 2 of Synechocystis sp. (strain ATCC 27184 / PCC 6803 / Kazusa).